Reading from the N-terminus, the 55-residue chain is Large ribosomal subunit protein bL33 (55 aa).

Belongs to the bacterial ribosomal protein bL33 family.

In Caulobacter sp. (strain K31), this protein is Large ribosomal subunit protein bL33.